A 213-amino-acid polypeptide reads, in one-letter code: Glycerol-3-phosphate acyltransferase (213 aa).

The next 5 helical transmembrane spans lie at 3-23 (LLLFITIAYLLGSIPTGLWIG), 68-88 (ILLPIIFGMTSISSIAIGFFA), 112-132 (VLLGFAPLYLFFLASIFVLVL), 134-154 (LFSMISLASVVSAIVGVLSVL), and 163-183 (LPNYDYFLTFIVILLAFIIII).

The protein belongs to the PlsY family. Probably interacts with PlsX.

It is found in the cell membrane. The enzyme catalyses an acyl phosphate + sn-glycerol 3-phosphate = a 1-acyl-sn-glycero-3-phosphate + phosphate. Its pathway is lipid metabolism; phospholipid metabolism. Functionally, catalyzes the transfer of an acyl group from acyl-phosphate (acyl-PO(4)) to glycerol-3-phosphate (G3P) to form lysophosphatidic acid (LPA). This enzyme utilizes acyl-phosphate as fatty acyl donor, but not acyl-CoA or acyl-ACP. The polypeptide is Glycerol-3-phosphate acyltransferase (Streptococcus pyogenes serotype M28 (strain MGAS6180)).